Reading from the N-terminus, the 361-residue chain is P2Y purinoceptor 4 (361 aa).

Residues 1 to 30 (MTSADSLLFTSLGPSPSSGDGDCKFNEEFK) lie on the Extracellular side of the membrane. The helical transmembrane segment at 31 to 58 (FILLPLSYAVVFVLGLALNAPTLWLFLF) threads the bilayer. At 59 to 68 (RLRPWDATAT) the chain is on the cytoplasmic side. The chain crosses the membrane as a helical span at residues 69–91 (YMFHLALSDTLYVLSLPTLVYYY). At 92–108 (AARNHWPFGTGFCKFVR) the chain is on the extracellular side. The cysteines at positions 104 and 181 are disulfide-linked. A helical transmembrane segment spans residues 109–127 (FLFYWNLYCSVLFLTCISV). At 128 to 149 (HRYMGICHPLRAIRWGRPRFAG) the chain is on the cytoplasmic side. A helical transmembrane segment spans residues 150 to 170 (LLCLGVWLVVAGCLVPNLFFV). At 171 to 192 (TTNANGTTILCHDTTLPEEFDH) the chain is on the extracellular side. An N-linked (GlcNAc...) asparagine glycan is attached at N175. The chain crosses the membrane as a helical span at residues 193–218 (YVYFSSTIMVLLFGFPFLITLVCYGL). Residues 219–242 (MARRLYRPLPGAGQSSSRLRSLRT) are Cytoplasmic-facing. A helical membrane pass occupies residues 243–265 (IAVVLTVFAVCFVPFHITRTIYY). Residues 266-283 (LARLLNAECRVLNIVNVV) are Extracellular-facing. The chain crosses the membrane as a helical span at residues 284-305 (YKVTRPLASANSCLDPVLYLFT). Residues 306-361 (GDKYRNQLQQLCRGSTPKRRTTASSLALVTLHEESISRWADIHQDSIFPAYEGDRL) are Cytoplasmic-facing.

Belongs to the G-protein coupled receptor 1 family. Post-translationally, phosphorylation of Ser-329 and Ser-330 is a key step in agonist-dependent desensitization and loss of surface P2RY4. This phosphorylation does not involve PKC, nor other calcium-activated kinases. In terms of tissue distribution, expressed in the liver, intestine, stomach, bladder and lung.

The protein resides in the cell membrane. Receptor for ATP and UTP coupled to G-proteins that activate a phosphatidylinositol-calcium second messenger system. This chain is P2Y purinoceptor 4 (P2ry4), found in Mus musculus (Mouse).